Here is a 241-residue protein sequence, read N- to C-terminus: 2,3,4,5-tetrahydropyridine-2,6-dicarboxylate N-acetyltransferase (241 aa).

It belongs to the transferase hexapeptide repeat family. DapH subfamily.

It carries out the reaction (S)-2,3,4,5-tetrahydrodipicolinate + acetyl-CoA + H2O = L-2-acetamido-6-oxoheptanedioate + CoA. It participates in amino-acid biosynthesis; L-lysine biosynthesis via DAP pathway; LL-2,6-diaminopimelate from (S)-tetrahydrodipicolinate (acetylase route): step 1/3. Its function is as follows. Catalyzes the transfer of an acetyl group from acetyl-CoA to tetrahydrodipicolinate. In Thermoanaerobacter sp. (strain X514), this protein is 2,3,4,5-tetrahydropyridine-2,6-dicarboxylate N-acetyltransferase.